Here is a 428-residue protein sequence, read N- to C-terminus: Phosphomethylpyrimidine synthase (428 aa).

Residues Asn66, Met95, Tyr124, His163, 185–187 (SRG), 226–229 (DGLR), and Glu265 contribute to the substrate site. Residue His269 coordinates Zn(2+). Tyr292 is a substrate binding site. His333 serves as a coordination point for Zn(2+). 3 residues coordinate [4Fe-4S] cluster: Cys407, Cys410, and Cys414.

Belongs to the ThiC family. It depends on [4Fe-4S] cluster as a cofactor.

The catalysed reaction is 5-amino-1-(5-phospho-beta-D-ribosyl)imidazole + S-adenosyl-L-methionine = 4-amino-2-methyl-5-(phosphooxymethyl)pyrimidine + CO + 5'-deoxyadenosine + formate + L-methionine + 3 H(+). Its pathway is cofactor biosynthesis; thiamine diphosphate biosynthesis. Catalyzes the synthesis of the hydroxymethylpyrimidine phosphate (HMP-P) moiety of thiamine from aminoimidazole ribotide (AIR) in a radical S-adenosyl-L-methionine (SAM)-dependent reaction. The sequence is that of Phosphomethylpyrimidine synthase from Thermococcus kodakarensis (strain ATCC BAA-918 / JCM 12380 / KOD1) (Pyrococcus kodakaraensis (strain KOD1)).